A 1085-amino-acid polypeptide reads, in one-letter code: Cell wall protein IFF6 (1085 aa).

The N-terminal stretch at 1–19 (MLLKQIFLPFFVLFNAINA) is a signal peptide. The disordered stretch occupies residues 339 to 1060 (PSPGTDESSS…SSNSATIPEQ (722 aa)). The segment covering 342–528 (GTDESSSLSS…QSSSGTGQSS (187 aa)) has biased composition (low complexity). Positions 529-538 (TEDEPIDSTE) are enriched in acidic residues. A compositionally biased stretch (low complexity) spans 539-828 (SDTSSATDSS…TVTNTATNTG (290 aa)). Residues Asn-659, Asn-782, Asn-854, Asn-860, Asn-864, Asn-874, Asn-882, Asn-886, Asn-890, Asn-896, Asn-900, Asn-910, Asn-924, Asn-932, Asn-938, Asn-952, Asn-960, Asn-964, Asn-968, Asn-976, Asn-980, Asn-992, Asn-996, Asn-1008, and Asn-1016 are each glycosylated (N-linked (GlcNAc...) asparagine). The span at 847–1010 (NNGGGSNNGS…GSGSGSGNGS (164 aa)) shows a compositional bias: gly residues. Residues 1018–1028 (SGSGSGSGNGQ) are compositionally biased toward gly residues. Residues 1031 to 1052 (GIITSSIGQPGSSTSTQGPSSS) show a composition bias toward low complexity. Residue Asn-1062 is the site of GPI-anchor amidated asparagine attachment. A propeptide spans 1063 to 1085 (SGNHIKFTLFNGLLIGLVPIVFM) (removed in mature form).

This sequence belongs to the HYR1/IFF family. Post-translationally, the GPI-anchor is attached to the protein in the endoplasmic reticulum and serves to target the protein to the cell surface. There, the glucosamine-inositol phospholipid moiety is cleaved off and the GPI-modified mannoprotein is covalently attached via its lipidless GPI glycan remnant to the 1,6-beta-glucan of the outer cell wall layer.

The protein localises to the secreted. It is found in the cell wall. It localises to the membrane. GPI-anchored cell wall protein involved in cell wall organization, hyphal growth, as well as in host-fungal interaction and virulence. This is Cell wall protein IFF6 (IFF6) from Candida albicans (strain SC5314 / ATCC MYA-2876) (Yeast).